A 66-amino-acid polypeptide reads, in one-letter code: Large ribosomal subunit protein uL29c (66 aa).

Belongs to the universal ribosomal protein uL29 family.

Its subcellular location is the plastid. It localises to the chloroplast. The protein is Large ribosomal subunit protein uL29c of Gracilaria tenuistipitata var. liui (Red alga).